The sequence spans 512 residues: Probable anion transporter 3, chloroplastic (512 aa).

Residues 1–44 (MATVGSLKPLHHSSCSSSFPRNPIVNRKALLGFVFDSARKNQIR) constitute a chloroplast transit peptide. 12 consecutive transmembrane segments (helical) span residues 102 to 124 (VILT…VAVV), 139 to 159 (VVQS…GALV), 167 to 187 (VLAW…WAAA), 191 to 211 (LALL…MPSM), 228 to 248 (VGIS…LTPL), 250 to 270 (LSSI…LLWV), 324 to 344 (WAII…LSWM), 359 to 379 (AAWF…YAGA), 396 to 416 (KIMQ…LNFA), 422 to 442 (AAVF…GFLL), 462 to 482 (AGTL…QWLG), and 486 to 506 (AFLT…LLFA).

The protein belongs to the major facilitator superfamily. Sodium/anion cotransporter (TC 2.A.1.14) family. As to expression, expressed in roots.

The protein localises to the plastid. Its subcellular location is the chloroplast membrane. Inorganic phosphate and probable anion transporter. This Arabidopsis thaliana (Mouse-ear cress) protein is Probable anion transporter 3, chloroplastic (ANTR3).